The following is a 262-amino-acid chain: Thrombin-like enzyme calobin-1 (262 aa).

The first 18 residues, 1-18 (MVLISVLANLLILQLSYA), serve as a signal peptide directing secretion. A propeptide spanning residues 19-24 (QKSSEL) is cleaved from the precursor. Residues 25–253 (VIGGDECNIN…HLDWIQSIIA (229 aa)) enclose the Peptidase S1 domain. Disulfide bonds link Cys-31–Cys-165, Cys-52–Cys-68, Cys-100–Cys-260, Cys-144–Cys-214, Cys-176–Cys-193, and Cys-204–Cys-229. His-67 serves as the catalytic Charge relay system. The N-linked (GlcNAc...) asparagine glycan is linked to Asn-105. Residue Asp-112 is the Charge relay system of the active site. The Charge relay system role is filled by Ser-208.

Belongs to the peptidase S1 family. Snake venom subfamily. As to quaternary structure, monomer. In terms of processing, N-glycosylated. Expressed by the venom gland.

The protein localises to the secreted. Its activity is regulated as follows. Strongly inhibited by PMSF, and moderately by benzamidine and soybean trypsin inhibitor. Its function is as follows. Thrombin-like snake venom serine protease. Has a coagulant activity. Acts on alpha-chains of fibrinogen (FGA) generating fibrinopeptide A. In Gloydius ussuriensis (Ussuri mamushi), this protein is Thrombin-like enzyme calobin-1.